A 212-amino-acid polypeptide reads, in one-letter code: Interleukin-6 (212 aa).

An N-terminal signal peptide occupies residues 1–27; the sequence is MNSVSTSAFGPVAFSLGLLLVLPAAFP. A disulfide bridge links Cys-72 with Cys-78. An N-linked (GlcNAc...) asparagine glycan is attached at Asn-73. Residue Ser-81 is modified to Phosphoserine. Cys-101 and Cys-111 are disulfide-bonded. Asn-172 carries N-linked (GlcNAc...) asparagine glycosylation.

The protein belongs to the IL-6 superfamily. Component of a hexamer of two molecules each of IL6, IL6R and IL6ST; first binds to IL6R to associate with the signaling subunit IL6ST. Interacts with IL6R (via the N-terminal ectodomain); this interaction may be affected by IL6R-binding with SORL1, hence decreasing IL6 cis signaling. Interacts with SORL1 (via the N-terminal ectodomain); this interaction leads to IL6 internalization and lysosomal degradation. May form a trimeric complex with the soluble SORL1 ectodomain and soluble IL6R receptor; this interaction might stabilize circulating IL6, hence promoting IL6 trans signaling.

The protein resides in the secreted. In terms of biological role, cytokine with a wide variety of biological functions in immunity, tissue regeneration, and metabolism. Binds to IL6R, then the complex associates to the signaling subunit IL6ST/gp130 to trigger the intracellular IL6-signaling pathway. The interaction with the membrane-bound IL6R and IL6ST stimulates 'classic signaling', whereas the binding of IL6 and soluble IL6R to IL6ST stimulates 'trans-signaling'. Alternatively, 'cluster signaling' occurs when membrane-bound IL6:IL6R complexes on transmitter cells activate IL6ST receptors on neighboring receiver cells. IL6 is a potent inducer of the acute phase response. Rapid production of IL6 contributes to host defense during infection and tissue injury, but excessive IL6 synthesis is involved in disease pathology. In the innate immune response, is synthesized by myeloid cells, such as macrophages and dendritic cells, upon recognition of pathogens through toll-like receptors (TLRs) at the site of infection or tissue injury. In the adaptive immune response, is required for the differentiation of B cells into immunoglobulin-secreting cells. Plays a major role in the differentiation of CD4(+) T cell subsets. Essential factor for the development of T follicular helper (Tfh) cells that are required for the induction of germinal-center formation. Required to drive naive CD4(+) T cells to the Th17 lineage. Also required for proliferation of myeloma cells and the survival of plasmablast cells. Functionally, acts as an essential factor in bone homeostasis and on vessels directly or indirectly by induction of VEGF, resulting in increased angiogenesis activity and vascular permeability. Induces, through 'trans-signaling' and synergistically with IL1B and TNF, the production of VEGF. Involved in metabolic controls, is discharged into the bloodstream after muscle contraction increasing lipolysis and improving insulin resistance. 'Trans-signaling' in central nervous system also regulates energy and glucose homeostasis. Mediates, through GLP-1, crosstalk between insulin-sensitive tissues, intestinal L cells and pancreatic islets to adapt to changes in insulin demand. Also acts as a myokine. Plays a protective role during liver injury, being required for maintenance of tissue regeneration. Also has a pivotal role in iron metabolism by regulating HAMP/hepcidin expression upon inflammation or bacterial infection. Through activation of IL6ST-YAP-NOTCH pathway, induces inflammation-induced epithelial regeneration. The chain is Interleukin-6 (IL6) from Macaca thibetana (Pere David's macaque).